Here is a 1334-residue protein sequence, read N- to C-terminus: WASH complex subunit 2 (1334 aa).

The tract at residues 1-219 is sufficient for interaction with WASHC3, WASHC4 and WASHC5; required for interaction with WASHC1; it reads MNRTSPDSER…VGSDRGSIVD (219 aa). Residues Ser157, Ser159, Ser204, Ser205, and Ser209 each carry the phosphoserine modification. Residues 201–213 are compositionally biased toward low complexity; it reads GELSSEEGSVGSD. The tract at residues 201-471 is disordered; sequence GELSSEEGSV…SKPSKTDKVK (271 aa). Acidic residues-rich tracts occupy residues 219-232 and 249-274; these read DSED…SDED and SDEE…EDIE. Ser284 bears the Phosphoserine mark. Residues 289–324 are compositionally biased toward basic and acidic residues; that stretch reads LAARIKGDISNQRKEGQTDGKPQKTVKEKKERRTPA. Thr322 carries the post-translational modification Phosphothreonine. Positions 347–594 are sufficient for interaction with CCDC93; that stretch reads SRGGLFSNGQ…QTSSLQPQSQ (248 aa). Positions 348–1334 are interaction with VPS35; that stretch reads RGGLFSNGQG…DDPLNAFGSQ (987 aa). Positions 358-368 match the LFa 1 motif; the sequence is LFDDEDESDLF. Ser388 carries the post-translational modification Phosphoserine. 2 consecutive short sequence motifs (LFa) follow at residues 441-457 and 476-485; these read LFDD…NNFF and IFDDDEGDLF. The span at 442–454 shows a compositional bias: acidic residues; sequence FDDDDNDNDEDDN. The segment at 492–650 is disordered; that stretch reads LPAASVSQTH…DSGATQGQEA (159 aa). The span at 513–530 shows a compositional bias: polar residues; sequence LPSSKNLKLVSETKTQKG. 2 short sequence motifs (LFa) span residues 531–542 and 566–577; these read LFSDEEDSEDLF and LFGDEDEEDSLF. Phosphoserine occurs at positions 533 and 538. Over residues 541 to 561 the composition is skewed to low complexity; it reads LFSSQSSSKPKSASLPSSQPP. 2 stretches are compositionally biased toward polar residues: residues 584–594 and 601–611; these read KQTSSLQPQSQ and EQPSKKTSALL. 2 positions are modified to phosphoserine: Ser613 and Ser614. Basic and acidic residues predominate over residues 625–639; the sequence is SHTKLASDNKSKGEL. 2 short sequence motifs (LFa) span residues 658-670 and 686-698; these read LFED…VDLF and LFED…SSLF. The segment at 691–837 is disordered; it reads AESGSSLFGL…SRPKSTGVFQ (147 aa). Ser723, Ser747, Ser752, Ser783, and Ser798 each carry phosphoserine. Residues 800–811 are compositionally biased toward acidic residues; the sequence is FDEDEDKVEDES. Basic and acidic residues predominate over residues 818–830; that stretch reads DGREKGLKTDSRP. 2 short sequence motifs (LFa) span residues 835–843 and 852–858; these read VFQDEELLF and DPDVDLF. Disordered stretches follow at residues 862–948 and 1014–1225; these read KKIR…PSSR and AQAD…SKTH. Phosphoserine is present on residues Ser870 and Ser873. The LFa 10 signature appears at 874–884; the sequence is LFGDDEDDDLF. The span at 894-906 shows a compositional bias: basic and acidic residues; that stretch reads PEKKGTLKKDHPV. Positions 908–919 are enriched in polar residues; it reads LKNQDPLDSTQG. Residues 932-1334 form an interaction with phospholipids region; it reads QDSSGLTPFK…DDPLNAFGSQ (403 aa). Over residues 1023–1041 the composition is skewed to basic residues; that stretch reads NKSRVKVRGKRRPQTRAAR. The interval 1024 to 1042 is required for interaction with F-actin-capping protein subunit alpha (CAPZA1 or CAPZA2 or CAPZA3); it reads KSRVKVRGKRRPQTRAARR. Ser1049, Ser1067, Ser1084, and Ser1109 each carry phosphoserine. 3 consecutive short sequence motifs (LFa) follow at residues 1124–1131, 1164–1178, and 1194–1202; these read LFDSGDIF, AFPD…EDLF, and LLEDEEDLF. Phosphoserine occurs at positions 1169, 1172, and 1173. Residues 1203–1225 show a composition bias toward basic and acidic residues; the sequence is ADPRGKKNERKPDSHQDSVSKTH. 3 consecutive short sequence motifs (LFa) follow at residues 1227–1233, 1255–1263, and 1283–1292; these read IFEDDIF, LFDDNIDIF, and MFDDDTDDIF. Residues 1294 to 1334 form a disordered region; that stretch reads SGLQAKASKPKSQSAEAASEQRSEHKVASIFDDPLNAFGSQ. Positions 1297–1311 are enriched in low complexity; sequence QAKASKPKSQSAEAA. The LFa 17 motif lies at 1323–1331; sequence IFDDPLNAF. The residue at position 1333 (Ser1333) is a Phosphoserine.

The protein belongs to the FAM21 family. In terms of assembly, component of the WASH core complex also described as WASH regulatory complex (SHRC) composed of WASHC1, WASHC2, WASHC3, WASHC4 and WASHC5; in the complex interacts (via N-terminus) directly with WASHC1. The WASH core complex associates with the F-actin-capping protein dimer (formed by CAPZA1, CAPZA2 or CAPZA3 and CAPZB) in a transient or substoichiometric manner which was initially described as WASH complex. Interacts with VPS35; mediates the association with the retromer CSC complex. Interacts with FKBP15. Interacts with CCDC93, CCDC22, VPS35L; indicative for an association of the WASH core complex with the CCC and retriever complexes. Directly interacts with TBC1D23.

It is found in the early endosome membrane. The protein resides in the cell membrane. Its function is as follows. Acts as a component of the WASH core complex that functions as a nucleation-promoting factor (NPF) at the surface of endosomes, where it recruits and activates the Arp2/3 complex to induce actin polymerization, playing a key role in the fission of tubules that serve as transport intermediates during endosome sorting. Mediates the recruitment of the WASH core complex to endosome membranes via binding to phospholipids and VPS35 of the retromer CSC. Mediates the recruitment of the F-actin-capping protein dimer to the WASH core complex probably promoting localized F-actin polymerization needed for vesicle scission. Via its C-terminus binds various phospholipids, most strongly phosphatidylinositol 4-phosphate (PtdIns-(4)P), phosphatidylinositol 5-phosphate (PtdIns-(5)P) and phosphatidylinositol 3,5-bisphosphate (PtdIns-(3,5)P2). Involved in the endosome-to-plasma membrane trafficking and recycling of SNX27-retromer-dependent cargo proteins, such as GLUT1. Required for the association of DNAJC13, ENTR1, ANKRD50 with retromer CSC subunit VPS35. Required for the endosomal recruitment of CCC and retriever complexes subunits COMMD1 and CCDC93 as well as the retrievere complex subunit VPS35L. This is WASH complex subunit 2 from Mus musculus (Mouse).